Here is a 102-residue protein sequence, read N- to C-terminus: Malonate decarboxylase acyl carrier protein (102 aa).

Ser27 bears the O-(phosphoribosyl dephospho-coenzyme A)serine mark.

It belongs to the MdcC family. Post-translationally, covalently binds the prosthetic group of malonate decarboxylase.

Its subcellular location is the cytoplasm. In terms of biological role, subunit of malonate decarboxylase, it is an acyl carrier protein to which acetyl and malonyl thioester residues are bound via a 2'-(5''-phosphoribosyl)-3'-dephospho-CoA prosthetic group and turn over during the catalytic mechanism. This chain is Malonate decarboxylase acyl carrier protein, found in Acinetobacter calcoaceticus.